The following is a 185-amino-acid chain: MESPMHLPEVIAVQQESQQMGLSVTAPELHGSLSGLLAGGGGNGPDWLAMILADAEVAAPPKGSVLERLYQATASQLEDPDFAFQLLLADDGATLAARADALFEWCRAFLGGFGLAAHSRSVLSAEGDEILRDLAKLAQASVDDFDMNEEEEDGSLEEIEEFVRVAVLLLHGDCLIGPCAPQPLN.

It belongs to the UPF0149 family.

This chain is UPF0149 protein XF_2010, found in Xylella fastidiosa (strain 9a5c).